Consider the following 121-residue polypeptide: Peptidyl-tRNA hydrolase (121 aa).

Belongs to the PTH2 family.

The protein localises to the cytoplasm. It carries out the reaction an N-acyl-L-alpha-aminoacyl-tRNA + H2O = an N-acyl-L-amino acid + a tRNA + H(+). Functionally, the natural substrate for this enzyme may be peptidyl-tRNAs which drop off the ribosome during protein synthesis. This is Peptidyl-tRNA hydrolase from Staphylothermus marinus (strain ATCC 43588 / DSM 3639 / JCM 9404 / F1).